The chain runs to 122 residues: MICOS complex subunit MIC13 homolog QIL1 (122 aa).

Residues 9–25 form a helical membrane-spanning segment; sequence GGLVAATVYYTQKVGIW.

Belongs to the MICOS complex subunit Mic13 family. In terms of assembly, component of the mitochondrial contact site and cristae organizing system (MICOS) complex.

It is found in the mitochondrion inner membrane. Its function is as follows. Component of the MICOS complex, a large protein complex of the mitochondrial inner membrane that plays crucial roles in the maintenance of crista junctions, inner membrane architecture, and formation of contact sites to the outer membrane. The sequence is that of MICOS complex subunit MIC13 homolog QIL1 from Drosophila melanogaster (Fruit fly).